We begin with the raw amino-acid sequence, 118 residues long: Class I hydrophobin 1 (118 aa).

The signal sequence occupies residues Met-1–Ala-20. Cystine bridges form between Cys-34/Cys-97, Cys-41/Cys-91, Cys-42/Cys-77, and Cys-98/Cys-111. The N-linked (GlcNAc...) asparagine glycan is linked to Asn-54. Asn-115 carries N-linked (GlcNAc...) asparagine glycosylation.

Belongs to the fungal hydrophobin family. As to quaternary structure, self-assembles to form functional amyloid fibrils called rodlets. Self-assembly into fibrillar rodlets occurs spontaneously at hydrophobic:hydrophilic interfaces and the rodlets further associate laterally to form amphipathic monolayers.

The protein resides in the secreted. The protein localises to the cell wall. Its function is as follows. Aerial growth, conidiation, and dispersal of filamentous fungi in the environment rely upon a capability of their secreting small amphipathic proteins called hydrophobins (HPBs) with low sequence identity. Class I can self-assemble into an outermost layer of rodlet bundles on aerial cell surfaces, conferring cellular hydrophobicity that supports fungal growth, development and dispersal; whereas Class II form highly ordered films at water-air interfaces through intermolecular interactions but contribute nothing to the rodlet structure. In Coprinopsis cinerea (strain Okayama-7 / 130 / ATCC MYA-4618 / FGSC 9003) (Inky cap fungus), this protein is Class I hydrophobin 1.